Consider the following 204-residue polypeptide: Large ribosomal subunit protein bL25 (204 aa).

Residues 1-23 (MSETLHLSAETRDRAGKGASRAL) form a disordered region.

Belongs to the bacterial ribosomal protein bL25 family. CTC subfamily. In terms of assembly, part of the 50S ribosomal subunit; part of the 5S rRNA/L5/L18/L25 subcomplex. Contacts the 5S rRNA. Binds to the 5S rRNA independently of L5 and L18.

Its function is as follows. This is one of the proteins that binds to the 5S RNA in the ribosome where it forms part of the central protuberance. This chain is Large ribosomal subunit protein bL25, found in Novosphingobium aromaticivorans (strain ATCC 700278 / DSM 12444 / CCUG 56034 / CIP 105152 / NBRC 16084 / F199).